A 190-amino-acid chain; its full sequence is DNA dC-&gt;dU-editing enzyme APOBEC-3C (190 aa).

The CMP/dCMP-type deaminase domain maps to 29 to 138 (DRNETWLCFT…TDYQEGLRSL (110 aa)). His66, Cys97, and Cys100 together coordinate Zn(2+).

It belongs to the cytidine and deoxycytidylate deaminase family. As to quaternary structure, homodimer. Interacts with TRIB3. Zn(2+) serves as cofactor.

Its subcellular location is the nucleus. It is found in the cytoplasm. The enzyme catalyses a 2'-deoxycytidine in single-stranded DNA + H2O + H(+) = a 2'-deoxyuridine in single-stranded DNA + NH4(+). In terms of biological role, DNA deaminase (cytidine deaminase) which acts as an inhibitor of retrovirus replication and retrotransposon mobility via deaminase-dependent and -independent mechanisms. May also play a role in the epigenetic regulation of gene expression through the process of active DNA demethylation. The protein is DNA dC-&gt;dU-editing enzyme APOBEC-3C (APOBEC3C) of Gorilla gorilla gorilla (Western lowland gorilla).